Consider the following 175-residue polypeptide: Lithostathine (175 aa).

Residues 1–26 (MLPSLGLPRLSWMLLSCLMLLSQIQG) form the signal peptide. The propeptide occupies 27–37 (ENSQKELPSAR). The region spanning 38 to 173 (ISCPSGSMAY…NLNLPYVCKF (136 aa)) is the C-type lectin domain. Intrachain disulfides connect cysteine 40–cysteine 51, cysteine 68–cysteine 171, and cysteine 146–cysteine 163.

As to quaternary structure, cleaved to give an A chain and a B chain joined by a disulfide bond. As to expression, in pancreatic acinar cells.

It is found in the secreted. Functionally, might act as an inhibitor of spontaneous calcium carbonate precipitation. The polypeptide is Lithostathine (PTP) (Bos taurus (Bovine)).